A 243-amino-acid polypeptide reads, in one-letter code: Probable transcriptional regulatory protein LCA_1307 (243 aa).

The segment at 1-21 (MSGHSKWHNIQGRKNAQDAKR) is disordered.

This sequence belongs to the TACO1 family.

Its subcellular location is the cytoplasm. The polypeptide is Probable transcriptional regulatory protein LCA_1307 (Latilactobacillus sakei subsp. sakei (strain 23K) (Lactobacillus sakei subsp. sakei)).